A 603-amino-acid polypeptide reads, in one-letter code: Conglutin beta 2 (603 aa).

The first 30 residues, 1 to 30 (MANMRVKFPTLVLLLGIVFLMAVSIGIAYG), serve as a signal peptide directing secretion. Over residues 36 to 105 (KNHERPQERE…REPSRGREQE (70 aa)) the composition is skewed to basic and acidic residues. Disordered regions lie at residues 36–177 (KNHE…RNPY), 343–363 (DGQE…DQGV), and 375–399 (LRKH…LRSD). A compositionally biased stretch (low complexity) spans 137–147 (QGSSSSSGRQS). Over residues 148–172 (GYERREQREEREQQQEQDSRSESRR) the composition is skewed to basic and acidic residues. In terms of domain architecture, Cupin type-1 1 spans 177-335 (YYFSYERFQT…TFNTRYEEIQ (159 aa)). Over residues 381–393 (SSSGKGKPSESGP) the composition is skewed to low complexity. The region spanning 394–554 (FNLRSDEPIY…TFPGSVEDVE (161 aa)) is the Cupin type-1 2 domain. The N-linked (GlcNAc...) asparagine glycan is linked to Asn504. Positions 564 to 574 (YFANAQPQQQQ) are enriched in low complexity. Positions 564–583 (YFANAQPQQQQQREKEGRRG) are disordered.

This sequence belongs to the 7S seed storage protein family. Component of globulins complexes which accumulate in seeds.

Seed storage protein. Accumulates during seed development and is hydrolyzed after germination to provide a carbon and nitrogen source for the developing seedling. The protein is Conglutin beta 2 of Lupinus angustifolius (Narrow-leaved blue lupine).